Here is a 311-residue protein sequence, read N- to C-terminus: MNHTMVTEFVLLGLSDDPDLQIVIFLFLFITYILSVTGNLTIITLTFVDSHLQTPMYFFLRNFSFLEISFTTVCIPRFLGAIITRNKTISYNNCAAQLFFFIFMGVTEFYILTAMSYDRYVAICKPLHYTSIMNRKLCTLLVLCAWLSGFLTIFPPLMLLLQLDYCASNVIDHFACDYFPLLQLSCSDTWLLEVIGFYFALVTLLFTLALVILSYMYIIRTILRIPSASQRKKAFSTCSSHMIVISISYGSCIFMYANPSAKEKASLTKGIAILNTSVAPMLNPFIYTLRNQQVKQAFKNVVHKVVFYANQ.

Topologically, residues 1 to 22 (MNHTMVTEFVLLGLSDDPDLQI) are extracellular. Asn2 carries N-linked (GlcNAc...) asparagine glycosylation. Residues 23-43 (VIFLFLFITYILSVTGNLTII) form a helical membrane-spanning segment. The Cytoplasmic portion of the chain corresponds to 44 to 51 (TLTFVDSH). The chain crosses the membrane as a helical span at residues 52–72 (LQTPMYFFLRNFSFLEISFTT). Residues 73–96 (VCIPRFLGAIITRNKTISYNNCAA) lie on the Extracellular side of the membrane. Cys94 and Cys186 form a disulfide bridge. The chain crosses the membrane as a helical span at residues 97–117 (QLFFFIFMGVTEFYILTAMSY). Over 118–136 (DRYVAICKPLHYTSIMNRK) the chain is Cytoplasmic. The helical transmembrane segment at 137 to 157 (LCTLLVLCAWLSGFLTIFPPL) threads the bilayer. Over 158–194 (MLLLQLDYCASNVIDHFACDYFPLLQLSCSDTWLLEV) the chain is Extracellular. The helical transmembrane segment at 195 to 214 (IGFYFALVTLLFTLALVILS) threads the bilayer. The Cytoplasmic portion of the chain corresponds to 215-234 (YMYIIRTILRIPSASQRKKA). Residues 235–255 (FSTCSSHMIVISISYGSCIFM) traverse the membrane as a helical segment. Topologically, residues 256–268 (YANPSAKEKASLT) are extracellular. Residues 269 to 289 (KGIAILNTSVAPMLNPFIYTL) traverse the membrane as a helical segment. At 290 to 311 (RNQQVKQAFKNVVHKVVFYANQ) the chain is on the cytoplasmic side.

Belongs to the G-protein coupled receptor 1 family.

The protein localises to the cell membrane. Odorant receptor. The chain is Olfactory receptor 6C3 (OR6C3) from Homo sapiens (Human).